Consider the following 509-residue polypeptide: Zinc finger protein Aiolos (509 aa).

Residues methionine 1–isoleucine 85 form a disordered region. Residues leucine 10 to threonine 20 are compositionally biased toward polar residues. The residue at position 20 (threonine 20) is a Phosphothreonine. The span at aspartate 56 to leucine 72 shows a compositional bias: basic and acidic residues. Glycyl lysine isopeptide (Lys-Gly) (interchain with G-Cter in SUMO2) cross-links involve residues lysine 61, lysine 73, and lysine 100. 3 C2H2-type zinc fingers span residues methionine 118–histidine 140, phenylalanine 146–histidine 168, and phenylalanine 174–histidine 196. The segment at tyrosine 202–cysteine 224 adopts a C2H2-type 4; atypical zinc-finger fold. Lysine 245 participates in a covalent cross-link: Glycyl lysine isopeptide (Lys-Gly) (interchain with G-Cter in SUMO2). Threonine 326 is subject to Phosphothreonine. The tract at residues histidine 365–glycine 421 is disordered. Serine 378 is subject to Phosphoserine. Residues aspartate 385–asparagine 398 show a composition bias toward basic and acidic residues. The C2H2-type 5 zinc finger occupies tyrosine 452–histidine 474. Positions tyrosine 452–histidine 504 are mediates homodimerization and heterodimerization. The segment at phenylalanine 480 to histidine 504 adopts a C2H2-type 6; atypical zinc-finger fold.

This sequence belongs to the Ikaros C2H2-type zinc-finger protein family. As to quaternary structure, homodimer. Heterodimer with other IKAROS family members. Interacts with IKZF4 and IKZF5. Interacts with IKZF1. Interacts with HRAS. Interacts with FOXP3; this interaction may be required for silencing target genes and regulating the suppressive activity of FOXP3-positive regulatory T-cells (Treg). Interacts with BCL21L; this interaction blocks the anti-apoptotic role of BCL21L. Associates with histone deacetylase complexes containing HDAC1, MTA2 and SIN3A.

It localises to the nucleus. It is found in the cytoplasm. Transcription factor that plays an important role in the regulation of lymphocyte differentiation. Plays an essential role in regulation of B-cell differentiation, proliferation and maturation to an effector state. Involved in regulating BCL2 expression and controlling apoptosis in T-cells in an IL2-dependent manner. The sequence is that of Zinc finger protein Aiolos (IKZF3) from Bos taurus (Bovine).